The following is a 345-amino-acid chain: Proto-oncogene serine/threonine-protein kinase mos (345 aa).

Residues 63–344 (VCLLQRLGAG…LDLRALQAEL (282 aa)) enclose the Protein kinase domain. ATP-binding positions include 69–77 (LGAGGFGSV) and Lys-90. Asp-202 (proton acceptor) is an active-site residue.

Belongs to the protein kinase superfamily. Ser/Thr protein kinase family. Interacts with MAP2K1/MEK1. As to expression, restricted to gonadal tissues.

Its subcellular location is the cytoplasm. It carries out the reaction L-seryl-[protein] + ATP = O-phospho-L-seryl-[protein] + ADP + H(+). The enzyme catalyses L-threonyl-[protein] + ATP = O-phospho-L-threonyl-[protein] + ADP + H(+). Serine/threonine kinase involved in the regulation of MAPK signaling. Is an activator of the ERK1/2 signaling cascade playing an essential role in the stimulation of oocyte maturation. This is Proto-oncogene serine/threonine-protein kinase mos from Sus scrofa (Pig).